A 302-amino-acid chain; its full sequence is tRNA pseudouridine synthase B (302 aa).

The active-site Nucleophile is Asp-43.

This sequence belongs to the pseudouridine synthase TruB family. Type 1 subfamily.

It carries out the reaction uridine(55) in tRNA = pseudouridine(55) in tRNA. Its function is as follows. Responsible for synthesis of pseudouridine from uracil-55 in the psi GC loop of transfer RNAs. The sequence is that of tRNA pseudouridine synthase B from Burkholderia pseudomallei (strain 668).